We begin with the raw amino-acid sequence, 429 residues long: UDP-N-acetylglucosamine 1-carboxyvinyltransferase (429 aa).

22 to 23 (KN) lines the phosphoenolpyruvate pocket. Arginine 102 is a UDP-N-acetyl-alpha-D-glucosamine binding site. Cysteine 126 (proton donor) is an active-site residue. Cysteine 126 carries the 2-(S-cysteinyl)pyruvic acid O-phosphothioketal modification. Residues 131 to 135 (RPVDL), aspartate 316, and isoleucine 338 each bind UDP-N-acetyl-alpha-D-glucosamine.

The protein belongs to the EPSP synthase family. MurA subfamily.

The protein resides in the cytoplasm. It carries out the reaction phosphoenolpyruvate + UDP-N-acetyl-alpha-D-glucosamine = UDP-N-acetyl-3-O-(1-carboxyvinyl)-alpha-D-glucosamine + phosphate. The protein operates within cell wall biogenesis; peptidoglycan biosynthesis. Functionally, cell wall formation. Adds enolpyruvyl to UDP-N-acetylglucosamine. In Methylobacterium sp. (strain 4-46), this protein is UDP-N-acetylglucosamine 1-carboxyvinyltransferase.